We begin with the raw amino-acid sequence, 120 residues long: MSKVIFALVLVVVLVACINATYVEFEEAYAPVDCKGQCTTPCEPLTACKEKCAESCETSADKKTCRRNCKKADCEPQDKVCDACRMKCHKACRAANCASECPKHEHKSDTCRACMKTNCK.

A signal peptide spans 1 to 20; it reads MSKVIFALVLVVVLVACINA. A propeptide spanning residues 21–29 is cleaved from the precursor; it reads TYVEFEEAY. 9 disulfides stabilise this stretch: C34–C88, C38–C84, C42–C81, C48–C74, C52–C69, C56–C65, C92–C119, C97–C114, and C101–C111.

Interacts with VIP1. Expressed in vanadocytes.

The protein resides in the cytoplasm. Its function is as follows. Acts as a vanadium reductase which may form an electron transfer cascade in conjunction with NADPH and glutathione through thiol disulfide exchange reactions. Partial cleavage of its disulfide bonds results in the reduction of V(5+) to V(4+). Binds up to 24 V(4+) ions per protein at pH 7.5. Also binds Fe(3+) and Cu(2+) and, to a lesser extent, Co(2+), Zn(2+) and Ni(2+). The sequence is that of Vanadium-binding protein 2 from Ascidia sydneiensis samea (Vanadium-rich ascidian).